Here is a 120-residue protein sequence, read N- to C-terminus: C-C motif chemokine 23 (120 aa).

A signal peptide spans 1-21 (MKVSVAALSCLMLVTALGSQA). 3 disulfide bridges follow: Cys54–Cys78, Cys55–Cys94, and Cys65–Cys105.

Belongs to the intercrine beta (chemokine CC) family. The N-terminal is proteolytically cleaved by proteases associated with inflammatory responses. The processed forms, CCL23(19-99), CCL23(22-99), CCL23(27-99) and CCL23(30-99) exhibit increase in CCR1-mediated signaling and chemotaxis assays in vitro. As to expression, high levels in adult lung, liver, skeletal muscle and pancreas. Moderate levels in fetal liver, adult bone marrow and placenta. The short form is the major species and the longer form was detected only in very low abundance. CCL23(19-99), CCL23(22-99), CCL23(27-99), CCL23(30-99) are found in high levels in synovial fluids from rheumatoid patients.

The protein resides in the secreted. Functionally, shows chemotactic activity for monocytes, resting T-lymphocytes, and neutrophils, but not for activated lymphocytes. Inhibits proliferation of myeloid progenitor cells in colony formation assays. This protein can bind heparin. Binds CCR1. CCL23(19-99), CCL23(22-99), CCL23(27-99), CCL23(30-99) are more potent chemoattractants than CCL23. The sequence is that of C-C motif chemokine 23 (CCL23) from Homo sapiens (Human).